An 874-amino-acid chain; its full sequence is Ectonucleotide pyrophosphatase/phosphodiesterase family member 3 (874 aa).

Residues 1-11 (MDSRLALATEE) are Cytoplasmic-facing. A helical; Signal-anchor for type II membrane protein transmembrane segment spans residues 12–30 (PIKKDSLKKYKILCVVLLA). Residues 31 to 874 (LLVIVSLGLG…TYLPTFETII (844 aa)) are Extracellular-facing. 2 consecutive SMB domains span residues 51–93 (QGSC…VKST) and 94–138 (QIWT…GESP). Cystine bridges form between cysteine 54-cysteine 58, cysteine 54-cysteine 71, cysteine 58-cysteine 89, cysteine 69-cysteine 71, cysteine 69-cysteine 82, cysteine 75-cysteine 81, cysteine 82-cysteine 89, cysteine 98-cysteine 115, cysteine 103-cysteine 133, cysteine 113-cysteine 126, cysteine 119-cysteine 125, cysteine 144-cysteine 190, and cysteine 152-cysteine 364. Residues 78 to 80 (RGD) carry the Cell attachment site motif. A phosphodiesterase region spans residues 160 to 544 (PVILFSMDGF…HGSLNHLLKT (385 aa)). Aspartate 167 serves as a coordination point for Zn(2+). Lysine 204 contributes to the ATP binding site. Threonine 205 is a binding site for Zn(2+). Threonine 205 functions as the Nucleophile in the catalytic mechanism. Asparagine 226 lines the ATP pocket. An N-linked (GlcNAc...) asparagine glycan is attached at asparagine 236. Aspartate 275 contributes to the ATP binding site. 2 N-linked (GlcNAc...) asparagine glycosylation sites follow: asparagine 279 and asparagine 288. Tyrosine 289 is an ATP binding site. Zn(2+) contacts are provided by aspartate 325, histidine 329, aspartate 372, and histidine 373. Intrachain disulfides connect cysteine 380–cysteine 477, cysteine 428–cysteine 817, cysteine 561–cysteine 623, cysteine 574–cysteine 679, cysteine 576–cysteine 664, and cysteine 786–cysteine 796. A glycan (N-linked (GlcNAc...) asparagine) is linked at asparagine 425. Residue histidine 482 coordinates Zn(2+). Asparagine 532, asparagine 594, asparagine 687, and asparagine 701 each carry an N-linked (GlcNAc...) asparagine glycan. Residues 581 to 874 (NTPGLEEQAN…TYLPTFETII (294 aa)) form a nuclease region. Residues aspartate 751, asparagine 753, aspartate 755, histidine 757, and aspartate 759 each coordinate Ca(2+). The N-linked (GlcNAc...) asparagine glycan is linked to asparagine 820.

Monomer and homodimer. Zn(2+) serves as cofactor. In terms of processing, N-glycosylated. N-glycosylation is necessary for normal transport to the cell membrane, but is not the apical targeting signal. In terms of tissue distribution, detected at the tip of villi in the small intestine. Detected on basophils and mast cells (at protein level). Detected in the epithelial layer of the small intestine; expression is higher in the proximal part and lower in the distal part of the small intestine.

The protein localises to the cell membrane. It localises to the apical cell membrane. Its subcellular location is the secreted. The catalysed reaction is a ribonucleoside 5'-triphosphate + H2O = a ribonucleoside 5'-phosphate + diphosphate + H(+). It catalyses the reaction UDP-N-acetyl-alpha-D-glucosamine + H2O = N-acetyl-alpha-D-glucosamine 1-phosphate + UMP + 2 H(+). The enzyme catalyses ATP + H2O = AMP + diphosphate + H(+). It carries out the reaction CTP + H2O = CMP + diphosphate + H(+). The catalysed reaction is GTP + H2O = GMP + diphosphate + H(+). It catalyses the reaction UTP + H2O = UMP + diphosphate + H(+). The enzyme catalyses Hydrolytically removes 5'-nucleotides successively from the 3'-hydroxy termini of 3'-hydroxy-terminated oligonucleotides.. It carries out the reaction P(1),P(3)-bis(5'-adenosyl) triphosphate + H2O = AMP + ADP + 2 H(+). The catalysed reaction is P(1),P(4)-bis(5'-adenosyl) tetraphosphate + H2O = AMP + ATP + 2 H(+). It catalyses the reaction P(1),P(5)-bis(5'-adenosyl) pentaphosphate + H2O = adenosine 5'-tetraphosphate + AMP + 2 H(+). The enzyme catalyses P(1),P(4)-bis(5'-guanosyl) tetraphosphate + H2O = GMP + GTP + 2 H(+). Functionally, hydrolase that metabolizes extracellular nucleotides, including ATP, GTP, UTP and CTP. Limits mast cells and basophils response during inflammation and during the chronic phases of allergic responses by eliminating extracellular ATP, a signaling molecule activating these cells in an autocrine manner. Metabolizes extracellular ATP in the lumen of the small intestine, and thereby prevents ATP-induced apoptosis of intestinal plasmacytoid dendritic cells. Has a broad specificity and can also hydrolyze UDP-GlcNAc into UMP and GlcNAc-1-phosphate and potentially several other intracellular nucleotide sugars, including UDP-GalNAc, CMP-NeuAc, GDP-Fuc, and UDP-GlcA. Thereby, could modulate glycan biosynthesis and protein glycosylation. Can hydrolyze extracellular dinucleoside polyphosphates, including the vasoactive adenosine polyphosphates as well. In addition, displays an alkaline phosphodiesterase activity in vitro. This Mus musculus (Mouse) protein is Ectonucleotide pyrophosphatase/phosphodiesterase family member 3.